The chain runs to 205 residues: NAD(P)H dehydrogenase (quinone) (205 aa).

A Flavodoxin-like domain is found at 3–194 (VLVVYYSMYG…AAARYQGKHV (192 aa)). FMN-binding positions include 9-14 (SMYGHI) and 82-84 (TRF). An NAD(+)-binding site is contributed by tyrosine 11. Tryptophan 102 is a substrate binding site. Histidine 138 serves as a coordination point for FMN.

The protein belongs to the WrbA family. FMN is required as a cofactor.

It carries out the reaction a quinone + NADH + H(+) = a quinol + NAD(+). The enzyme catalyses a quinone + NADPH + H(+) = a quinol + NADP(+). This chain is NAD(P)H dehydrogenase (quinone), found in Geotalea daltonii (strain DSM 22248 / JCM 15807 / FRC-32) (Geobacter daltonii).